A 71-amino-acid polypeptide reads, in one-letter code: UPF0346 protein str0441 (71 aa).

The protein belongs to the UPF0346 family.

This Streptococcus thermophilus (strain CNRZ 1066) protein is UPF0346 protein str0441.